Reading from the N-terminus, the 211-residue chain is Large ribosomal subunit protein uL4 (211 aa).

Residues 50–77 are disordered; that stretch reads STLTKGEVSGGGKKPYKQKHTGKARQGS. Over residues 63–72 the composition is skewed to basic residues; that stretch reads KPYKQKHTGK.

This sequence belongs to the universal ribosomal protein uL4 family. As to quaternary structure, part of the 50S ribosomal subunit.

Its function is as follows. One of the primary rRNA binding proteins, this protein initially binds near the 5'-end of the 23S rRNA. It is important during the early stages of 50S assembly. It makes multiple contacts with different domains of the 23S rRNA in the assembled 50S subunit and ribosome. In terms of biological role, forms part of the polypeptide exit tunnel. The chain is Large ribosomal subunit protein uL4 from Mycoplasma genitalium (strain ATCC 33530 / DSM 19775 / NCTC 10195 / G37) (Mycoplasmoides genitalium).